The primary structure comprises 473 residues: mRNA export factor ICP27 homolog (473 aa).

Disordered regions lie at residues 57 to 81 and 123 to 143; these read QELL…NSIY and QTKR…NFPM. Residues C362, H438, C442, and C447 each coordinate Zn(2+). The CHC2-type zinc finger occupies 362-447; sequence CKYGTEKRSM…HTRRCSDPAC (86 aa).

This sequence belongs to the HHV-1 ICP27 protein family. In terms of assembly, associates in a complex with RNA, and host export factors NXF1/TAP and ALYREF; these interactions allow nuclear export of viral transcripts.

The protein localises to the host cytoplasm. The protein resides in the host nucleus. In terms of biological role, multifunctional regulator of the expression of viral genes that mediates nuclear export of viral intronless mRNAs. This immediate early (EI) protein promotes the nuclear export of viral intronless mRNAs by interacting with mRNAs and host NXF1/TAP. This is mRNA export factor ICP27 homolog from Gallus gallus (Chicken).